We begin with the raw amino-acid sequence, 309 residues long: S-methyl-5'-thioadenosine phosphorylase (309 aa).

Residues T19, R64–H65, and S97–A98 each bind phosphate. Residue M201 participates in substrate binding. Position 202 (S202) interacts with phosphate. D225–D227 provides a ligand contact to substrate.

The protein belongs to the PNP/MTAP phosphorylase family. MTAP subfamily. In terms of assembly, homotrimer.

The protein localises to the cytoplasm. It localises to the nucleus. The catalysed reaction is S-methyl-5'-thioadenosine + phosphate = 5-(methylsulfanyl)-alpha-D-ribose 1-phosphate + adenine. It functions in the pathway amino-acid biosynthesis; L-methionine biosynthesis via salvage pathway; S-methyl-5-thio-alpha-D-ribose 1-phosphate from S-methyl-5'-thioadenosine (phosphorylase route): step 1/1. Its function is as follows. Catalyzes the reversible phosphorylation of S-methyl-5'-thioadenosine (MTA) to adenine and 5-methylthioribose-1-phosphate. Involved in the breakdown of MTA, a major by-product of polyamine biosynthesis. Responsible for the first step in the methionine salvage pathway after MTA has been generated from S-adenosylmethionine. Has broad substrate specificity with 6-aminopurine nucleosides as preferred substrates. The sequence is that of S-methyl-5'-thioadenosine phosphorylase from Tuber melanosporum (strain Mel28) (Perigord black truffle).